The primary structure comprises 356 residues: Outer spore wall protein LDS2 (356 aa).

At 1–92 (MSTRPQPDWY…ISESVGNSDY (92 aa)) the chain is on the cytoplasmic side. Residues 93–113 (LHLFFLIFGYYLLNLLLIVAF) form a helical membrane-spanning segment. Over 114–115 (TS) the chain is Extracellular. The chain crosses the membrane as a helical span at residues 116–136 (ILAWSLLVCIYLPFLGLFALP). Residues 137–213 (LAYMQTILIS…KRFYLVSLPQ (77 aa)) are Cytoplasmic-facing. A helical transmembrane segment spans residues 214–234 (FFIFFFWYIFIAFMFLLLLLV). Residues 235-294 (PIVGPITINMLPFSPGMGFYYFEPYFVDVLHLDSRKLSKVYYKGFAKWLLYSISSGLLES) lie on the Extracellular side of the membrane. Residues 295 to 315 (IPILGGLFIGTNAVGASLWIV) traverse the membrane as a helical segment. The Cytoplasmic portion of the chain corresponds to 316–356 (KEIKDRDQPAVPPSPPAEPEEPTVGSYAPPIQQSIAHINPP). The tract at residues 322–356 (DQPAVPPSPPAEPEEPTVGSYAPPIQQSIAHINPP) is disordered. A compositionally biased stretch (polar residues) spans 346–356 (IQQSIAHINPP).

The protein belongs to the LDS family.

It localises to the prospore membrane. It is found in the lipid droplet. Its subcellular location is the spore wall. Functionally, involved in spore wall assembly. This chain is Outer spore wall protein LDS2, found in Saccharomyces cerevisiae (strain ATCC 204508 / S288c) (Baker's yeast).